Consider the following 21-residue polypeptide: AKTGILDSDGPTVAGNSLSGT.

The interval 1 to 21 (AKTGILDSDGPTVAGNSLSGT) is disordered.

Its subcellular location is the secreted. It localises to the nematocyst. Its function is as follows. Injection into mice produces severe neurotoxic effects such as circular movements, aggressive behavior, dyspnea, tonic-clonic convulsion and death. This Bunodosoma cangicum (Sea anemone) protein is Granulitoxin.